A 201-amino-acid polypeptide reads, in one-letter code: ATP-dependent Clp protease proteolytic subunit (201 aa).

Ser100 serves as the catalytic Nucleophile. Residue His125 is part of the active site.

This sequence belongs to the peptidase S14 family. Component of the chloroplastic Clp protease core complex.

The protein resides in the plastid. It localises to the chloroplast stroma. The catalysed reaction is Hydrolysis of proteins to small peptides in the presence of ATP and magnesium. alpha-casein is the usual test substrate. In the absence of ATP, only oligopeptides shorter than five residues are hydrolyzed (such as succinyl-Leu-Tyr-|-NHMec, and Leu-Tyr-Leu-|-Tyr-Trp, in which cleavage of the -Tyr-|-Leu- and -Tyr-|-Trp bonds also occurs).. Its function is as follows. Cleaves peptides in various proteins in a process that requires ATP hydrolysis. Has a chymotrypsin-like activity. Plays a major role in the degradation of misfolded proteins. The polypeptide is ATP-dependent Clp protease proteolytic subunit (Chloranthus spicatus (Chulantree)).